Reading from the N-terminus, the 225-residue chain is UPF0128 protein PH1314 (225 aa).

This sequence belongs to the UPF0128 family.

The sequence is that of UPF0128 protein PH1314 from Pyrococcus horikoshii (strain ATCC 700860 / DSM 12428 / JCM 9974 / NBRC 100139 / OT-3).